We begin with the raw amino-acid sequence, 233 residues long: MYEGLEDLKVDTVNRKTLAKQVIERIVHLLSSGQLRAGDKLPTEMELMDILHVSRPVLREALSSLETLGVITRKTRGGTYFNDKIGMQPFSVMLALATDNLPAIIEARMALELGLVTIAAEKINEEELQRLQKTIDDIANSTDNHYGEADKEFHRIIALSANNPVVEGMIQSLLITHAKIDSQIPYRERDVTVEYHKKIYDALAKRDPYKAHYHMYEHLKFVRDKILKGMDEK.

Residues 16-84 (KTLAKQVIER…TRGGTYFNDK (69 aa)) enclose the HTH gntR-type domain. Positions 44–63 (EMELMDILHVSRPVLREALS) form a DNA-binding region, H-T-H motif.

This is an uncharacterized protein from Bacillus subtilis (strain 168).